The primary structure comprises 310 residues: UDP-N-acetylenolpyruvoylglucosamine reductase (310 aa).

The FAD-binding PCMH-type domain occupies 27–192; the sequence is KIGGKARYIV…LKATFRLQYA (166 aa). The active site involves R171. S223 functions as the Proton donor in the catalytic mechanism. Residue E293 is part of the active site.

The protein belongs to the MurB family. FAD serves as cofactor.

The protein localises to the cytoplasm. It carries out the reaction UDP-N-acetyl-alpha-D-muramate + NADP(+) = UDP-N-acetyl-3-O-(1-carboxyvinyl)-alpha-D-glucosamine + NADPH + H(+). It participates in cell wall biogenesis; peptidoglycan biosynthesis. In terms of biological role, cell wall formation. The sequence is that of UDP-N-acetylenolpyruvoylglucosamine reductase from Caldicellulosiruptor saccharolyticus (strain ATCC 43494 / DSM 8903 / Tp8T 6331).